The chain runs to 373 residues: Unsaturated rhamnogalacturonyl hydrolase YteR (373 aa).

Substrate-binding positions include 40–41 (HY), D88, and 132–136 (HKDGY). Catalysis depends on D143, which acts as the Proton donor. Residues 213–217 (RSIGW) and 333–334 (TS) each bind substrate.

The protein belongs to the glycosyl hydrolase 105 family. Monomer.

It is found in the cytoplasm. It carries out the reaction 2-O-(4-deoxy-beta-L-threo-hex-4-enopyranuronosyl)-alpha-L-rhamnose + H2O = 5-dehydro-4-deoxy-D-glucuronate + L-rhamnopyranose. Its function is as follows. Catalyzes the hydrolysis of unsaturated rhamnogalacturonan disaccharide to yield unsaturated D-galacturonic acid and L-rhamnose. It cannot act on unsaturated glucuronyl hydrolase (UGL) substrates containing unsaturated D-glucuronic acid at the non-reducing terminus, although the active pockets of YesR and UGL are very similar. The protein is Unsaturated rhamnogalacturonyl hydrolase YteR (yteR) of Bacillus subtilis (strain 168).